Here is a 160-residue protein sequence, read N- to C-terminus: Twist-related protein 2 (160 aa).

The disordered stretch occupies residues 1–63 (MEEGSSSPVS…GSPSAQSFEE (63 aa)). Positions 27–37 (KRFGRKRRYSK) are enriched in basic residues. A bHLH domain is found at 66 to 117 (SQRILANVRERQRTQSLNEAFAALRKIIPTLPSDKLSKIQTLKLAARYIDFL).

As to quaternary structure, efficient DNA binding requires dimerization with another bHLH protein. Forms a heterodimer with TCF3/E12. Also interacts with MEF2C. In terms of tissue distribution, in the embryo, highly expressed in chondrogenic cells. In embryonic skin, expressed in the undifferentiated mesenchymal layer beneath the epidermis which later develops into the dermis. Expressed in early myeloid cells but not in lymphoid cells in the liver. Expression also detected in the secretory ependymal epithelium of the choroid plexus primordium. In the adult, expressed in secreting glandular tissues and tubules.

The protein resides in the nucleus. The protein localises to the cytoplasm. Its function is as follows. Binds to the E-box consensus sequence 5'-CANNTG-3' as a heterodimer and inhibits transcriptional activation by MYOD1, MYOG, MEF2A and MEF2C. Also represses expression of pro-inflammatory cytokines such as TNFA and IL1B. Involved in postnatal glycogen storage and energy metabolism. Inhibits the premature or ectopic differentiation of preosteoblast cells during osteogenesis, possibly by changing the internal signal transduction response of osteoblasts to external growth factors. This is Twist-related protein 2 (TWIST2) from Homo sapiens (Human).